Here is a 446-residue protein sequence, read N- to C-terminus: Adenylosuccinate synthetase (446 aa).

Residues glycine 21–lysine 27 and glycine 49–threonine 51 contribute to the GTP site. Aspartate 22 serves as the catalytic Proton acceptor. The Mg(2+) site is built by aspartate 22 and glycine 49. IMP-binding positions include aspartate 22–lysine 25, asparagine 47–histidine 50, threonine 141, arginine 155, glutamine 236, threonine 251, and arginine 319. Histidine 50 functions as the Proton donor in the catalytic mechanism. Substrate is bound at residue valine 315–arginine 321. Residues arginine 321, lysine 347–aspartate 349, and serine 429–serine 431 contribute to the GTP site.

Belongs to the adenylosuccinate synthetase family. In terms of assembly, homodimer. Mg(2+) serves as cofactor.

The protein localises to the cytoplasm. The enzyme catalyses IMP + L-aspartate + GTP = N(6)-(1,2-dicarboxyethyl)-AMP + GDP + phosphate + 2 H(+). Its pathway is purine metabolism; AMP biosynthesis via de novo pathway; AMP from IMP: step 1/2. In terms of biological role, plays an important role in the de novo pathway of purine nucleotide biosynthesis. Catalyzes the first committed step in the biosynthesis of AMP from IMP. The protein is Adenylosuccinate synthetase of Polaromonas naphthalenivorans (strain CJ2).